The primary structure comprises 33 residues: Dermaseptin DS VIII-like peptide (33 aa).

Ala-33 is modified (alanine amide).

Expressed by the parotoid glands.

It localises to the secreted. Functionally, possesses a potent antimicrobial activity against bacteria, fungi and protozoa. Probably acts by disturbing membrane functions with its amphipathic structure. In Phyllomedusa burmeisteri (Brazilian common walking leaf frog), this protein is Dermaseptin DS VIII-like peptide.